Consider the following 81-residue polypeptide: Sulfur carrier protein TusA (81 aa).

The active-site Cysteine persulfide intermediate is cysteine 19.

It belongs to the sulfur carrier protein TusA family.

It is found in the cytoplasm. Functionally, sulfur carrier protein which probably makes part of a sulfur-relay system. The sequence is that of Sulfur carrier protein TusA from Shewanella baltica (strain OS223).